Here is a 210-residue protein sequence, read N- to C-terminus: Probable glutathione peroxidase 8 (210 aa).

The chain crosses the membrane as a helical span at residues 21-40 (VLLSMTVGVGCLLLLQTQLL).

Belongs to the glutathione peroxidase family.

It localises to the membrane. It catalyses the reaction 2 glutathione + H2O2 = glutathione disulfide + 2 H2O. In Tetraodon nigroviridis (Spotted green pufferfish), this protein is Probable glutathione peroxidase 8 (gpx8).